Reading from the N-terminus, the 259-residue chain is Trypsin (259 aa).

The first 32 residues, 1-32 (MKHFLRALKRCSVAVATVAIAVVGLQPVTASA), serve as a signal peptide directing secretion. Positions 33-36 (APNP) are cleaved as a propeptide — activation peptide. The region spanning 37-257 (VVGGTRAAQG…FASAIASAAR (221 aa)) is the Peptidase S1 domain. The cysteines at positions 58 and 74 are disulfide-linked. Active-site charge relay system residues include His-73 and Asp-118. Cystine bridges form between Cys-177/Cys-192 and Cys-204/Cys-233. Ser-208 (charge relay system) is an active-site residue.

The protein belongs to the peptidase S1 family.

It catalyses the reaction Preferential cleavage: Arg-|-Xaa, Lys-|-Xaa.. The polypeptide is Trypsin (sprT) (Streptomyces griseus).